The sequence spans 318 residues: Lysophospholipase D GDPD3 (318 aa).

The Cytoplasmic segment spans residues 1–2 (MS). The helical transmembrane segment at 3–23 (LLLYYALPALGSYAMLSIFFL) threads the bilayer. Over 24 to 198 (RRPHLLHTPR…KAANPEMPLS (175 aa)) the chain is Extracellular. The GP-PDE domain occupies 39–308 (IRLGAHRGGS…DYPTALRHYL (270 aa)). Glu71, Asp73, and His86 together coordinate a divalent metal cation. A helical membrane pass occupies residues 199–221 (FTISRGFWVLLSYYLGLLPFIPI). Residues 222-318 (PEKFFFCFLP…DNHGPAARTS (97 aa)) lie on the Cytoplasmic side of the membrane.

It belongs to the glycerophosphoryl diester phosphodiesterase family. In terms of tissue distribution, widely expressed, with high level in kidney and ovary.

The protein resides in the membrane. The protein localises to the cytoplasm. It localises to the perinuclear region. Its subcellular location is the endoplasmic reticulum. It carries out the reaction 1-hexadecanoyl-sn-glycero-3-phosphocholine + H2O = 1-hexadecanoyl-sn-glycero-3-phosphate + choline + H(+). It catalyses the reaction 1-hexadecanoyl-sn-glycero-3-phosphocholine + H2O = sn-glycerol 3-phosphocholine + hexadecanoate + H(+). The catalysed reaction is 1-O-(1Z-octadecenyl)-sn-glycero-3-phospho-N-hexadecanoyl-ethanolamine + H2O = 1-O-(1Z-octadecenyl)-sn-glycero-3-phosphate + N-hexadecanoylethanolamine + H(+). The enzyme catalyses N-(5Z,8Z,11Z,14Z-eicosatetraenoyl)-1-(9Z-octadecenoyl)-sn-glycero-3-phosphoethanolamine + H2O = N-(5Z,8Z,11Z,14Z-eicosatetraenoyl)-ethanolamine + 1-(9Z-octadecenoyl)-sn-glycero-3-phosphate + H(+). It carries out the reaction N,1-di-(9Z-octadecenoyl)-sn-glycero-3-phosphoethanolamine + H2O = N-(9Z-octadecenoyl) ethanolamine + 1-(9Z-octadecenoyl)-sn-glycero-3-phosphate + H(+). It catalyses the reaction N-hexadecanoyl-1-(9Z-octadecenoyl)-sn-glycero-3-phosphoethanolamine + H2O = N-hexadecanoylethanolamine + 1-(9Z-octadecenoyl)-sn-glycero-3-phosphate + H(+). The catalysed reaction is 1-O-hexadecyl-sn-glycero-3-phosphocholine + H2O = 1-O-hexadecyl-sn-glycero-3-phosphate + choline + H(+). Lysophospholipase D activity is stimulated by calcium. Loss of lysophospholipase D activity in presence of EDTA. Its function is as follows. Hydrolyzes lysoglycerophospholipids to produce lysophosphatidic acid (LPA) and the corresponding amines. Shows a preference for 1-O-alkyl-sn-glycero-3-phosphocholine (lyso-PAF), lysophosphatidylcholine (lyso-PC) and N-acylethanolamine lysophospholipids. Does not display glycerophosphodiester phosphodiesterase activity, since it cannot hydrolyze either glycerophosphoinositol or glycerophosphocholine. The sequence is that of Lysophospholipase D GDPD3 from Homo sapiens (Human).